Here is a 109-residue protein sequence, read N- to C-terminus: Spermidine export protein MdtI (109 aa).

At Met-1 to Glu-5 the chain is on the periplasmic side. The helical transmembrane segment at Trp-6–Leu-26 threads the bilayer. The Cytoplasmic segment spans residues Lys-27 to Lys-35. Residues Ile-36–Val-56 form a helical membrane-spanning segment. Over Lys-57 to Val-63 the chain is Periplasmic. Residues Val-64–Phe-84 traverse the membrane as a helical segment. Residues Gly-85–Arg-87 are Cytoplasmic-facing. The helical transmembrane segment at Leu-88–Leu-108 threads the bilayer. A topological domain (periplasmic) is located at residue Ala-109.

This sequence belongs to the drug/metabolite transporter (DMT) superfamily. Small multidrug resistance (SMR) (TC 2.A.7.1) family. MdtI subfamily. As to quaternary structure, forms a complex with MdtJ.

The protein localises to the cell inner membrane. In terms of biological role, catalyzes the excretion of spermidine. The chain is Spermidine export protein MdtI (mdtI) from Shigella flexneri.